The following is a 439-amino-acid chain: Phenylacetate-coenzyme A ligase (439 aa).

This sequence belongs to the phenylacetyl-CoA ligase family. Monomer.

It carries out the reaction 2-phenylacetate + ATP + CoA = phenylacetyl-CoA + AMP + diphosphate. It functions in the pathway aromatic compound metabolism; phenylacetate degradation. With respect to regulation, inhibited by divalent cations (zinc, copper, mercury) and by the sulfhydryl reagents 5,5-dithiobis(2-nitrobenzoic acid), N-ethylmaleimide and p-chloromercuribenzoate. In terms of biological role, catalyzes the activation of phenylacetic acid (PA) to phenylacetyl-CoA (PA-CoA). Involved in the phenylalanine metabolism. Can also use CTP and UTP as substrate. The polypeptide is Phenylacetate-coenzyme A ligase (paaK) (Pseudomonas putida (Arthrobacter siderocapsulatus)).